Reading from the N-terminus, the 523-residue chain is Cyclin-dependent kinase 17 (523 aa).

S9 carries the post-translational modification Phosphoserine. Residues 30 to 55 are disordered; sequence TIEENSSKDNEPIVKNGRPPTSHSMH. A phosphoserine mark is found at S80, S92, and S105. Residues 103–123 form a disordered region; it reads MGSDGESDQASGTSSDEVQSP. The segment covering 110-123 has biased composition (polar residues); sequence DQASGTSSDEVQSP. 4 positions are modified to phosphoserine: S137, S146, S165, and S180. Residues 192–473 enclose the Protein kinase domain; the sequence is YIKLEKLGEG…AEEAMKHVYF (282 aa). ATP is bound by residues 198–206 and K221; that span reads LGEGTYATV. Residue D313 is the Proton acceptor of the active site. The tract at residues 501 to 523 is disordered; it reads PGFRNSSYPETGHGKNRRQSMLF. A compositionally biased stretch (basic residues) spans 514-523; it reads GKNRRQSMLF.

Belongs to the protein kinase superfamily. CMGC Ser/Thr protein kinase family. CDC2/CDKX subfamily. In terms of assembly, found in a complex containing CABLES1, CDK16 and TDRD7. Interacts with TDRD7.

The enzyme catalyses L-seryl-[protein] + ATP = O-phospho-L-seryl-[protein] + ADP + H(+). It carries out the reaction L-threonyl-[protein] + ATP = O-phospho-L-threonyl-[protein] + ADP + H(+). Functionally, may play a role in terminally differentiated neurons. Has a Ser/Thr-phosphorylating activity for histone H1. This is Cyclin-dependent kinase 17 (CDK17) from Homo sapiens (Human).